We begin with the raw amino-acid sequence, 208 residues long: ATP phosphoribosyltransferase (208 aa).

This sequence belongs to the ATP phosphoribosyltransferase family. Short subfamily. In terms of assembly, heteromultimer composed of HisG and HisZ subunits.

It localises to the cytoplasm. The enzyme catalyses 1-(5-phospho-beta-D-ribosyl)-ATP + diphosphate = 5-phospho-alpha-D-ribose 1-diphosphate + ATP. It participates in amino-acid biosynthesis; L-histidine biosynthesis; L-histidine from 5-phospho-alpha-D-ribose 1-diphosphate: step 1/9. Its function is as follows. Catalyzes the condensation of ATP and 5-phosphoribose 1-diphosphate to form N'-(5'-phosphoribosyl)-ATP (PR-ATP). Has a crucial role in the pathway because the rate of histidine biosynthesis seems to be controlled primarily by regulation of HisG enzymatic activity. The sequence is that of ATP phosphoribosyltransferase from Oceanobacillus iheyensis (strain DSM 14371 / CIP 107618 / JCM 11309 / KCTC 3954 / HTE831).